The sequence spans 245 residues: Orotidine 5'-phosphate decarboxylase (245 aa).

Substrate is bound by residues Asp-22, Lys-44, 71–80 (DLKFHDIPNT), Thr-131, Arg-192, Gln-201, Gly-221, and Arg-222. The active-site Proton donor is Lys-73.

It belongs to the OMP decarboxylase family. Type 1 subfamily. Homodimer.

The catalysed reaction is orotidine 5'-phosphate + H(+) = UMP + CO2. It functions in the pathway pyrimidine metabolism; UMP biosynthesis via de novo pathway; UMP from orotate: step 2/2. Catalyzes the decarboxylation of orotidine 5'-monophosphate (OMP) to uridine 5'-monophosphate (UMP). The polypeptide is Orotidine 5'-phosphate decarboxylase (Escherichia coli O81 (strain ED1a)).